We begin with the raw amino-acid sequence, 612 residues long: Apoptosis-inducing factor 1, mitochondrial (612 aa).

2 consecutive short sequence motifs (mitochondrial localization signal) follow at residues 1–30 (MFRCGGLAGAFKQKLVPLVRSVCVQRPKQR) and 62–88 (KMDNSVLVLIVGLSTIGAGAYAYKTIK). The transit peptide at 1-53 (MFRCGGLAGAFKQKLVPLVRSVCVQRPKQRNRLPGNLFQQWRVPLELQMARQM) directs the protein to the mitochondrion. 2 consecutive propeptides (removed in mature form) follow at residues 54–100 (ASSG…RIMG) and 55–101 (SSGP…IMGL). Lys-108 is subject to N6-succinyllysine. Ser-115 bears the Phosphoserine mark. The FAD-dependent oxidoreductase stretch occupies residues 133–482 (FLLIGGGTAA…KPYWHQSMFW (350 aa)). Residues 137-141 (GGGTA), 163-164 (ED), Arg-171, and Lys-176 each bind FAD. Trp-195 contacts NAD(+). Val-232 provides a ligand contact to FAD. Lys-254 participates in a covalent cross-link: Glycyl lysine isopeptide (Lys-Gly) (interchain with G-Cter in ubiquitin). Ser-267 bears the Phosphoserine mark. Residue Arg-284 coordinates FAD. Residues 307–310 (GGFL), Glu-335, and Lys-341 each bind NAD(+). At Ser-370 the chain carries Phosphoserine. Lys-387 bears the N6-acetyllysine mark. Gly-398 lines the NAD(+) pocket. FAD is bound at residue Asp-437. The Nuclear localization signal signature appears at 445 to 450 (KLGRRR). NAD(+) contacts are provided by residues 452–453 (EH), Trp-482, and Glu-492. FAD-binding positions include 453-454 (HH) and Trp-482. The span at 512-528 (AQDNPKSATEQSGTGIR) shows a compositional bias: polar residues. The interval 512–551 (AQDNPKSATEQSGTGIRSESETESEASEITIPPSDPAVPQ) is disordered. Residue Thr-520 is modified to Phosphothreonine. Residues Ser-523 and Ser-529 each carry the phosphoserine modification. Asn-582 serves as a coordination point for NAD(+). Lys-592 is subject to N6-acetyllysine.

The protein belongs to the FAD-dependent oxidoreductase family. In terms of assembly, monomer (oxidized form). Homodimer (reduced form). Upon reduction with NADH, undergoes dimerization and forms tight, long-lived FADH2-NAD charge transfer complexes (CTC) resistant to oxidation. Also dimerizes with isoform 3 preventing its release from mitochondria. Interacts with XIAP/BIRC4. Interacts (via N-terminus) with EIF3G (via C-terminus). Interacts with PRELID1. Interacts with CHCHD4; the interaction increases in presence of NADH. Interacts with processed form of PARP1 (Poly [ADP-ribose] polymerase 1, processed C-terminus); interaction is mediated with poly-ADP-ribose chains attached to PARP1, promoting translocation into the nucleus. The cofactor is FAD. Post-translationally, under normal conditions, a 54-residue N-terminal segment is first proteolytically removed during or just after translocation into the mitochondrial intermembrane space (IMS) by the mitochondrial processing peptidase (MPP) to form the inner-membrane-anchored mature form (AIFmit). During apoptosis, it is further proteolytically processed at amino-acid position 101 leading to the generation of the mature form, which is confined to the mitochondrial IMS in a soluble form (AIFsol). AIFsol is released to the cytoplasm in response to specific death signals, and translocated to the nucleus, where it induces nuclear apoptosis in a caspase-independent manner. Ubiquitination by XIAP/BIRC4 does not lead to proteasomal degradation. Ubiquitination at Lys-254 by XIAP/BIRC4 blocks its ability to bind DNA and induce chromatin degradation, thereby inhibiting its ability to induce cell death.

Its subcellular location is the mitochondrion intermembrane space. It localises to the mitochondrion inner membrane. It is found in the cytoplasm. The protein localises to the nucleus. The protein resides in the perinuclear region. It catalyses the reaction A + NADH + H(+) = AH2 + NAD(+). Its function is as follows. Functions both as NADH oxidoreductase and as regulator of apoptosis. In response to apoptotic stimuli, it is released from the mitochondrion intermembrane space into the cytosol and to the nucleus, where it functions as a proapoptotic factor in a caspase-independent pathway. Release into the cytoplasm is mediated upon binding to poly-ADP-ribose chains. The soluble form (AIFsol) found in the nucleus induces 'parthanatos' i.e. caspase-independent fragmentation of chromosomal DNA. Binds to DNA in a sequence-independent manner. Interacts with EIF3G, and thereby inhibits the EIF3 machinery and protein synthesis, and activates caspase-7 to amplify apoptosis. Plays a critical role in caspase-independent, pyknotic cell death in hydrogen peroxide-exposed cells. In contrast, participates in normal mitochondrial metabolism. Plays an important role in the regulation of respiratory chain biogenesis by interacting with CHCHD4 and controlling CHCHD4 mitochondrial import. In Rattus norvegicus (Rat), this protein is Apoptosis-inducing factor 1, mitochondrial (Aifm1).